Reading from the N-terminus, the 512-residue chain is Dihydroniloticin synthase CYP71CD2 (512 aa).

The helical transmembrane segment at 1-21 (MNLQLDYFSITSFLVFLVVLF) threads the bilayer. Position 449 (Cys449) interacts with heme.

It belongs to the cytochrome P450 family. The cofactor is heme.

The protein localises to the membrane. It carries out the reaction tirucalla-7,24-dien-3beta-ol + 2 reduced [NADPH--hemoprotein reductase] + 2 O2 = dihydroniloticin + 2 oxidized [NADPH--hemoprotein reductase] + 2 H2O + 2 H(+). It participates in secondary metabolite biosynthesis; terpenoid biosynthesis. In terms of biological role, monooxygenase involved in the biosynthesis of limonoids triterpene natural products such as azadirachtin, an antifeedant widely used as bioinsecticide, and possessing many medicinal applications including anti-tumoral, anti-malarial, anti-rheumatic, antibacterial, anti-inflammatory, anti-pyretic and diuretic effects. Catalyzes the conversion of tirucalladienol to dihydroniloticin. The chain is Dihydroniloticin synthase CYP71CD2 from Azadirachta indica (Neem tree).